The following is a 260-amino-acid chain: Global transcriptional regulator CodY (260 aa).

The tract at residues 1-159 is GAF domain; that stretch reads MPNLLQKTRK…SSTVVGIQLL (159 aa). Positions 207 to 226 form a DNA-binding region, H-T-H motif; that stretch reads ASVIADRIGITRSVIVNALR.

This sequence belongs to the CodY family.

The protein resides in the cytoplasm. Its function is as follows. DNA-binding global transcriptional regulator which is involved in the adaptive response to starvation and acts by directly or indirectly controlling the expression of numerous genes in response to nutrient availability. During rapid exponential growth, CodY is highly active and represses genes whose products allow adaptation to nutrient depletion. The chain is Global transcriptional regulator CodY from Streptococcus equi subsp. zooepidemicus (strain MGCS10565).